Here is a 108-residue protein sequence, read N- to C-terminus: uncharacterized protein (108 aa).

Residues 1-21 (MFRSLFLAAALMAFTPLAANA) form the signal peptide.

To E.coli YaaX.

This is an uncharacterized protein from Escherichia coli O157:H7.